Here is a 345-residue protein sequence, read N- to C-terminus: MLLLLCVNMSGTQMSAFLRKYLADEDKKIRAQFKESDPNNKLILWMHEKTRITEEDLARPYTEDEVKELCLRTKVKVDMTAWNCLWEAKKRFEAKGRFVNKSERFINRMYMKAVRRKMVQPYPEEFVAQRREIVAAETKKQNISRLDRWQKKKSQNLSAPESSPDAHASSNDAVQSHEDQANTNLSSLSQMNFQVEAMAPPGVSSSDLSGIGDDEDEQQQSGFQDENINRPETEINENSVRCDPINLGRMRTGCINSQANNSFRNTESDPDYYMFGTQLSTLVRPTSTQEPDDQVNCPETEMNESWVRCDQINSESLSIGPSIDSEGTITFQNTESEPIDVTSIA.

The required for binding to Su(var)205 stretch occupies residues arginine 115–glutamate 337. Disordered regions lie at residues arginine 145–glutamine 180 and proline 200–proline 231. 2 short sequence motifs (su(var)205-binding Pro-containing repeat) span residues proline 231–glutamate 237 and proline 298–glutamate 304.

Component of the HipHop-HOAP telomere capping complex, composed of at least HipHop and cav/HOAP, and may include Su(var)205/HP1; HipHop and cav/HOAP, but not Su(var)205, are interdependent for their protein stability. Interacts with HipHop (via N-terminus). Interacts (via C-terminus) with Su(var)205/HP1 dimer (via hinge and chromoshadow domain) and Orc1; possibly interacts with other components of the origin recognition complex (ORC). Each molecule of cav/HOAP interacts with 2 molecules of Su(var)205/HP1. The HipHop-HOAP complex recruits the MTV complex, consisting of moi/modigliani, tea and ver/verrocchio, to telomeres, forming the terminin telomere-capping complex. Interacts with moi/modigliani; the interaction is direct. Interacts with ver/verrochio; the interaction is direct. Interacts with HP6, which is also part of the terminin complex. Interacts (via N-terminus) with peo/pendolino (via N-terminus); the interaction is direct.

Its subcellular location is the nucleus. The protein resides in the chromosome. It localises to the telomere. In terms of biological role, part of the HipHop-HOAP complex that recruits the MTV complex to form the terminin telomere-capping complex, which binds to chromosome ends in a sequence-independent manner and prevents telomere fusion. Telomere capping is independent of the origin recognition complex (ORC). In Drosophila melanogaster (Fruit fly), this protein is Telomere-binding protein cav.